The chain runs to 219 residues: Endonuclease III (219 aa).

One can recognise a HhH domain in the interval methionine 117–alanine 136. [4Fe-4S] cluster is bound by residues cysteine 197, cysteine 204, cysteine 207, and cysteine 213.

It belongs to the Nth/MutY family. Requires [4Fe-4S] cluster as cofactor.

It catalyses the reaction 2'-deoxyribonucleotide-(2'-deoxyribose 5'-phosphate)-2'-deoxyribonucleotide-DNA = a 3'-end 2'-deoxyribonucleotide-(2,3-dehydro-2,3-deoxyribose 5'-phosphate)-DNA + a 5'-end 5'-phospho-2'-deoxyribonucleoside-DNA + H(+). Functionally, DNA repair enzyme that has both DNA N-glycosylase activity and AP-lyase activity. The DNA N-glycosylase activity releases various damaged pyrimidines from DNA by cleaving the N-glycosidic bond, leaving an AP (apurinic/apyrimidinic) site. The AP-lyase activity cleaves the phosphodiester bond 3' to the AP site by a beta-elimination, leaving a 3'-terminal unsaturated sugar and a product with a terminal 5'-phosphate. This Synechocystis sp. (strain ATCC 27184 / PCC 6803 / Kazusa) protein is Endonuclease III.